Here is a 407-residue protein sequence, read N- to C-terminus: Putative replication protein A (407 aa).

The protein belongs to the ParA family.

The protein is Putative replication protein A of Sinorhizobium fredii (strain NBRC 101917 / NGR234).